A 250-amino-acid polypeptide reads, in one-letter code: Enoyl-[acyl-carrier-protein] reductase [NADPH] FabL (250 aa).

NADP(+) contacts are provided by residues 13-16, 36-38, 62-63, and asparagine 89; these read SRGV, ARS, and NV. Catalysis depends on proton acceptor residues tyrosine 151 and lysine 158. NADP(+) contacts are provided by residues lysine 158 and 187-189; that span reads IDT.

The protein belongs to the short-chain dehydrogenases/reductases (SDR) family. As to quaternary structure, homotetramer.

The enzyme catalyses a 2,3-saturated acyl-[ACP] + NADP(+) = a (2E)-enoyl-[ACP] + NADPH + H(+). The catalysed reaction is (2E)-butenoyl-[ACP] + NADPH + H(+) = butanoyl-[ACP] + NADP(+). It functions in the pathway lipid metabolism; fatty acid biosynthesis. With respect to regulation, inhibited by triclosan. Catalyzes the reduction of a carbon-carbon double bond in an enoyl moiety that is covalently linked to an acyl carrier protein (ACP). It confers resistance to triclosan. The chain is Enoyl-[acyl-carrier-protein] reductase [NADPH] FabL (fabL) from Bacillus subtilis (strain 168).